The sequence spans 469 residues: Ribulose bisphosphate carboxylase large chain (469 aa).

At Lys-8 the chain carries N6,N6,N6-trimethyllysine. The substrate site is built by Asn-117 and Thr-167. Lys-169 acts as the Proton acceptor in catalysis. Lys-171 contacts substrate. Positions 195, 197, and 198 each coordinate Mg(2+). The residue at position 195 (Lys-195) is an N6-carboxylysine. His-288 serves as the catalytic Proton acceptor. Residues Arg-289, His-321, and Ser-373 each contribute to the substrate site.

The protein belongs to the RuBisCO large chain family. Type I subfamily. Heterohexadecamer of 8 large chains and 8 small chains; disulfide-linked. The disulfide link is formed within the large subunit homodimers. The cofactor is Mg(2+). In terms of processing, the disulfide bond which can form in the large chain dimeric partners within the hexadecamer appears to be associated with oxidative stress and protein turnover.

The protein resides in the plastid. The protein localises to the chloroplast. It carries out the reaction 2 (2R)-3-phosphoglycerate + 2 H(+) = D-ribulose 1,5-bisphosphate + CO2 + H2O. The catalysed reaction is D-ribulose 1,5-bisphosphate + O2 = 2-phosphoglycolate + (2R)-3-phosphoglycerate + 2 H(+). Functionally, ruBisCO catalyzes two reactions: the carboxylation of D-ribulose 1,5-bisphosphate, the primary event in carbon dioxide fixation, as well as the oxidative fragmentation of the pentose substrate in the photorespiration process. Both reactions occur simultaneously and in competition at the same active site. This is Ribulose bisphosphate carboxylase large chain from Coleonema pulchellum (Confetti bush).